We begin with the raw amino-acid sequence, 60 residues long: Protein P7 (60 aa).

Residues 28–48 (FIGVTLIGMFISYYLYALISI) form a helical membrane-spanning segment.

The protein localises to the host membrane. This Vitis vinifera (Grape) protein is Protein P7.